Here is a 108-residue protein sequence, read N- to C-terminus: Universal stress protein Slr1101 (108 aa).

It belongs to the universal stress protein A family.

This Synechocystis sp. (strain ATCC 27184 / PCC 6803 / Kazusa) protein is Universal stress protein Slr1101.